A 1227-amino-acid polypeptide reads, in one-letter code: Sterol 3-beta-glucosyltransferase (1227 aa).

Disordered stretches follow at residues 1–76 and 104–189; these read MLKG…AASP and QLAT…MTSK. Over residues 48–57 the composition is skewed to basic and acidic residues; that stretch reads KHKEAERRLT. A compositionally biased stretch (acidic residues) spans 114-135; it reads AGADETEDEMDEAGDETGDDAD. Basic and acidic residues predominate over residues 154–171; that stretch reads ESRRSTLFELSIEPHPES. The segment covering 179–189 has biased composition (basic residues); the sequence is TKNRRSRMTSK. Residues 188–229 form the GRAM 1 domain; the sequence is SKLRSKFNLDDDEELVREYPCWLLRDVLIQGHIYLTSRNLLF. The PH domain maps to 239–342; the sequence is SARLTGNLSI…WSSALKKQVF (104 aa). A compositionally biased stretch (low complexity) spans 449-469; that stretch reads DAAIASEAAADAAAADTASHS. Disordered stretches follow at residues 449–484 and 523–550; these read DAAI…RSTE and TLKL…LESR. The GRAM 2 domain occupies 602–668; it reads KRFKAHFSLT…HDVENCYKEQ (67 aa). UDP-alpha-D-glucose-binding residues include Ser786, Arg787, Asp789, Asn1060, Asn1088, Val1089, His1091, His1104, Ser1107, Gly1108, Thr1109, Asp1128, and Gln1129.

It belongs to the glycosyltransferase 28 family.

Its subcellular location is the cytoplasm. It localises to the membrane. It catalyses the reaction a sterol + UDP-alpha-D-glucose = a sterol 3-beta-D-glucoside + UDP + H(+). The catalysed reaction is ergosterol + UDP-alpha-D-glucose = ergosteryl 3-beta-D-glucoside + UDP + H(+). Its function is as follows. Sterol glycosyltransferase responsible for the glycosylation of ergosterol to form ergosterol-glucoside. The sequence is that of Sterol 3-beta-glucosyltransferase from Eremothecium gossypii (strain ATCC 10895 / CBS 109.51 / FGSC 9923 / NRRL Y-1056) (Yeast).